The chain runs to 118 residues: UPF0295 protein BCG9842_B4782 (118 aa).

2 helical membrane passes run 12–32 (IRTFALSLVFIGLFIAYLGVF) and 43–63 (FMMVGFLAVIASTVVYFWIGM).

Belongs to the UPF0295 family.

It localises to the cell membrane. This chain is UPF0295 protein BCG9842_B4782, found in Bacillus cereus (strain G9842).